The following is a 244-amino-acid chain: Uridylate kinase (244 aa).

15-18 (KLSG) contacts ATP. The tract at residues 23 to 28 (GSEGFG) is involved in allosteric activation by GTP. Residue G57 participates in UMP binding. ATP contacts are provided by G58 and R62. Residues D77 and 138 to 145 (TGNPFFTT) each bind UMP. Residues T165, F171, and D174 each contribute to the ATP site.

This sequence belongs to the UMP kinase family. As to quaternary structure, homohexamer.

It localises to the cytoplasm. The enzyme catalyses UMP + ATP = UDP + ADP. The protein operates within pyrimidine metabolism; CTP biosynthesis via de novo pathway; UDP from UMP (UMPK route): step 1/1. Allosterically activated by GTP. Inhibited by UTP. Functionally, catalyzes the reversible phosphorylation of UMP to UDP. This chain is Uridylate kinase, found in Aeromonas hydrophila subsp. hydrophila (strain ATCC 7966 / DSM 30187 / BCRC 13018 / CCUG 14551 / JCM 1027 / KCTC 2358 / NCIMB 9240 / NCTC 8049).